We begin with the raw amino-acid sequence, 748 residues long: Cytosolic phospholipase A2 (748 aa).

Residues 1-178 are phospholipid binding; the sequence is MSFIDPYQHI…MRKLLGPKKS (178 aa). Serine 2 carries the phosphoserine modification. Residues 6–122 form the C2 domain; sequence PYQHIIVEHQ…KVGEKKEVPF (117 aa). Ca(2+) is bound by residues aspartate 40, threonine 41, aspartate 43, asparagine 65, aspartate 93, alanine 94, and asparagine 95. The PLA2c domain occupies 138-739; it reads VCSSPDLRFS…SNVEARRFFN (602 aa). Serine 228 acts as the Nucleophile in catalysis. The residue at position 268 (threonine 268) is a Phosphothreonine. Residues 428 to 458 form a disordered region; the sequence is HIVSNDSSDSDDESQEPKGTEGEDAEREYQN. Residues serine 434, serine 435, and serine 437 each carry the phosphoserine modification. The span at 442-458 shows a compositional bias: basic and acidic residues; it reads QEPKGTEGEDAEREYQN. Serine 505 carries the post-translational modification Phosphoserine; by MAPK. Serine 514 bears the Phosphoserine mark. A Glycyl lysine isopeptide (Lys-Gly) (interchain with G-Cter in SUMO2) cross-link involves residue lysine 540. The active-site Proton acceptor is the aspartate 548. Residue lysine 605 forms a Glycyl lysine isopeptide (Lys-Gly) (interchain with G-Cter in SUMO2) linkage. Residues serine 726 and serine 728 each carry the phosphoserine modification.

Interacts with KAT5. In terms of processing, phosphorylated at both Ser-505 and Ser-726 in response to mitogenic stimuli.

It is found in the cytoplasm. It localises to the golgi apparatus membrane. The protein localises to the nucleus envelope. It catalyses the reaction a 1,2-diacyl-sn-glycero-3-phosphocholine + H2O = a 1-acyl-sn-glycero-3-phosphocholine + a fatty acid + H(+). The catalysed reaction is a 1-O-alkyl-2-acyl-sn-glycero-3-phosphocholine + H2O = a 1-O-alkyl-sn-glycero-3-phosphocholine + a fatty acid + H(+). It carries out the reaction a 1-acyl-sn-glycero-3-phosphocholine + H2O = sn-glycerol 3-phosphocholine + a fatty acid + H(+). The enzyme catalyses 1-hexadecanoyl-2-(5Z,8Z,11Z,14Z-eicosatetraenoyl)-sn-glycero-3-phosphocholine + H2O = 1-hexadecanoyl-sn-glycero-3-phosphocholine + (5Z,8Z,11Z,14Z)-eicosatetraenoate + H(+). It catalyses the reaction 1,2-di-(5Z,8Z,11Z,14Z-eicosatetraenoyl)-sn-glycero-3-phosphocholine + H2O = 1-(5Z,8Z,11Z,14Z-eicosatetraenoyl)-sn-glycero-3-phosphocholine + (5Z,8Z,11Z,14Z)-eicosatetraenoate + H(+). The catalysed reaction is 1-octadecanoyl-2-(5Z,8Z,11Z,14Z-eicosatetraenoyl)-sn-glycero-3-phosphocholine + H2O = 1-octadecanoyl-sn-glycero-3-phosphocholine + (5Z,8Z,11Z,14Z)-eicosatetraenoate + H(+). It carries out the reaction 1-hexadecanoyl-2-(9Z,12Z-octadecadienoyl)-sn-glycero-3-phosphocholine + H2O = (9Z,12Z)-octadecadienoate + 1-hexadecanoyl-sn-glycero-3-phosphocholine + H(+). The enzyme catalyses 1-octadecanoyl-2-(9Z,12Z,15Z-octadecatrienoyl)-sn-glycero-3-phosphocholine + H2O = (9Z,12Z,15Z)-octadecatrienoate + 1-octadecanoyl-sn-glycero-3-phosphocholine + H(+). It catalyses the reaction 1-(5Z,8Z,11Z,14Z-eicosatetraenoyl)-2-hexadecanoyl-sn-glycero-3-phosphocholine + H2O = 1-(5Z,8Z,11Z,14Z-eicosatetraenoyl)-sn-glycero-3-phosphocholine + hexadecanoate + H(+). The catalysed reaction is 1-O-hexadecyl-2-(5Z,8Z,11Z,14Z)-eicosatetraenoyl-sn-glycero-3-phosphocholine + H2O = 1-O-hexadecyl-sn-glycero-3-phosphocholine + (5Z,8Z,11Z,14Z)-eicosatetraenoate + H(+). It carries out the reaction 1,2-di-(9Z-octadecenoyl)-sn-glycero-3-phospho-(1'-sn-glycerol) + H2O = 1-(9Z-octadecenoyl)-sn-glycero-3-phospho-(1'-sn-glycerol) + (9Z)-octadecenoate + H(+). The enzyme catalyses 1-octadecanoyl-2-(5Z,8Z,11Z,14Z-eicosatetraenoyl)-sn-glycero-3-phosphate + H2O = 1-octadecanoyl-sn-glycero-3-phosphate + (5Z,8Z,11Z,14Z)-eicosatetraenoate + H(+). It catalyses the reaction 1-hexadecanoyl-sn-glycero-3-phosphocholine + H2O = sn-glycerol 3-phosphocholine + hexadecanoate + H(+). The catalysed reaction is 2-(prostaglandin E2)-sn-glycero-3-phosphoethanolamine + H2O = sn-glycero-3-phosphoethanolamine + prostaglandin E2 + H(+). It carries out the reaction 2-[(15S)-hydroxy-(5Z,8Z,11Z,13E)-eicosatetraenoyl]-sn-glycero-3-phosphocholine + H2O = (15S)-hydroxy-(5Z,8Z,11Z,13E)-eicosatetraenoate + sn-glycerol 3-phosphocholine + H(+). The enzyme catalyses 2-[(15R)-hydroxy-(5Z,8Z,11Z,13E)-eicosatetraenoyl]-sn-glycero-3-phosphocholine + H2O = (15R)-hydroxy-(5Z,8Z,11Z,13E)-eicosatetraenoate + sn-glycerol 3-phosphocholine + H(+). It catalyses the reaction 2-(prostaglandin E2)-sn-glycero-3-phosphocholine + H2O = prostaglandin E2 + sn-glycerol 3-phosphocholine + H(+). The catalysed reaction is 2-[(11R)-hydroxy-(5Z,8Z,12E,14Z)-eicosatetraenoyl]-sn-glycero-3-phosphocholine + H2O = (11R)-hydroxy-(5Z,8Z,12E,14Z)-eicosatetraenoate + sn-glycerol 3-phosphocholine + H(+). It carries out the reaction 1-(5Z,8Z,11Z,14Z-eicosatetraenoyl)-2-O-hexadecyl-sn-glycero-3-phosphocholine + H2O = 2-O-hexadecyl-sn-glycero-3-phosphocholine + (5Z,8Z,11Z,14Z)-eicosatetraenoate + H(+). The enzyme catalyses 1-octadecanoyl-2-(5Z,8Z,11Z,14Z-eicosatetraenoyl)-sn-glycero-3-phosphocholine + glycerol = 1-(5Z,8Z,11Z,14Z-eicosatetraenoyl)-glycerol + 1-octadecanoyl-sn-glycero-3-phosphocholine. It catalyses the reaction 1-octadecanoyl-2-(9Z,12Z,15Z-octadecatrienoyl)-sn-glycero-3-phosphocholine + glycerol = 1-(9Z,12Z,15Z-octadecatrienoyl)-glycerol + 1-octadecanoyl-sn-glycero-3-phosphocholine. The protein operates within membrane lipid metabolism; glycerophospholipid metabolism. It participates in lipid metabolism; arachidonate metabolism. It functions in the pathway lipid metabolism; prostaglandin biosynthesis. Its pathway is lipid metabolism; leukotriene B4 biosynthesis. Its activity is regulated as follows. Activated by cytosolic calcium, which is necessary for binding to membrane lipids. Activated by phosphorylation in response to mitogenic stimuli. Functionally, has primarily calcium-dependent phospholipase and lysophospholipase activities, with a major role in membrane lipid remodeling and biosynthesis of lipid mediators of the inflammatory response. Plays an important role in embryo implantation and parturition through its ability to trigger prostanoid production. Preferentially hydrolyzes the ester bond of the fatty acyl group attached at sn-2 position of phospholipids (phospholipase A2 activity). Selectively hydrolyzes sn-2 arachidonoyl group from membrane phospholipids, providing the precursor for eicosanoid biosynthesis via the cyclooxygenase pathway. In an alternative pathway of eicosanoid biosynthesis, hydrolyzes sn-2 fatty acyl chain of eicosanoid lysophopholipids to release free bioactive eicosanoids. Hydrolyzes the ester bond of the fatty acyl group attached at sn-1 position of phospholipids (phospholipase A1 activity) only if an ether linkage rather than an ester linkage is present at the sn-2 position. This hydrolysis is not stereospecific. Has calcium-independent phospholipase A2 and lysophospholipase activities in the presence of phosphoinositides. Has O-acyltransferase activity. Catalyzes the transfer of fatty acyl chains from phospholipids to a primary hydroxyl group of glycerol (sn-1 or sn-3), potentially contributing to monoacylglycerol synthesis. In Oryctolagus cuniculus (Rabbit), this protein is Cytosolic phospholipase A2 (PLA2G4A).